Consider the following 245-residue polypeptide: Phosducin (245 aa).

The tract at residues 1–70 (MEKAKSQSLE…DKDSKERFSR (70 aa)) is disordered. The region spanning 1 to 244 (MEKAKSQSLE…LEQTNMEEDM (244 aa)) is the Phosducin domain. Composition is skewed to basic and acidic residues over residues 28 to 50 (DWRK…KEIL) and 58 to 69 (SRDDKDSKERFS). Residue serine 73 is modified to Phosphoserine; by PKA. The interval 111–245 (YGFVYELESG…EQTNMEEDME (135 aa)) is thioredoxin fold.

It belongs to the phosducin family. Interacts with CRX. Forms a complex with the beta and gamma subunits of the GTP-binding protein, transducin. Post-translationally, light-induced changes in cyclic nucleotide levels modulate the phosphorylation of this protein by cAMP kinase.

It is found in the cytoplasm. Its subcellular location is the cytosol. The protein localises to the nucleus. The protein resides in the cell projection. It localises to the cilium. It is found in the photoreceptor outer segment. Its subcellular location is the photoreceptor inner segment. Functionally, inhibits the transcriptional activation activity of the cone-rod homeobox CRX. May participate in the regulation of visual phototransduction or in the integration of photoreceptor metabolism. The sequence is that of Phosducin (PDC) from Bos taurus (Bovine).